The following is a 548-amino-acid chain: Chaperonin GroEL (548 aa).

ATP contacts are provided by residues 30-33 (TLGP), Lys-51, 87-91 (DGTTT), Gly-415, and Asp-496. The disordered stretch occupies residues 527–548 (SDKEDAMPPMRGGMGGMGGMDF). Over residues 538-548 (GGMGGMGGMDF) the composition is skewed to gly residues.

This sequence belongs to the chaperonin (HSP60) family. Forms a cylinder of 14 subunits composed of two heptameric rings stacked back-to-back. Interacts with the co-chaperonin GroES.

The protein localises to the cytoplasm. The catalysed reaction is ATP + H2O + a folded polypeptide = ADP + phosphate + an unfolded polypeptide.. Its function is as follows. Together with its co-chaperonin GroES, plays an essential role in assisting protein folding. The GroEL-GroES system forms a nano-cage that allows encapsulation of the non-native substrate proteins and provides a physical environment optimized to promote and accelerate protein folding. The chain is Chaperonin GroEL from Rickettsia akari (strain Hartford).